The primary structure comprises 130 residues: Ribonuclease P protein component 2 (130 aa).

This sequence belongs to the eukaryotic/archaeal RNase P protein component 2 family. In terms of assembly, consists of a catalytic RNA component and at least 4-5 protein subunits.

It is found in the cytoplasm. It catalyses the reaction Endonucleolytic cleavage of RNA, removing 5'-extranucleotides from tRNA precursor.. Part of ribonuclease P, a protein complex that generates mature tRNA molecules by cleaving their 5'-ends. The polypeptide is Ribonuclease P protein component 2 (Methanococcus vannielii (strain ATCC 35089 / DSM 1224 / JCM 13029 / OCM 148 / SB)).